Here is a 264-residue protein sequence, read N- to C-terminus: Thiazole synthase (264 aa).

The active-site Schiff-base intermediate with DXP is the Lys106. Residues Gly167, 193-194, and 215-216 each bind 1-deoxy-D-xylulose 5-phosphate; these read AG and NS.

The protein belongs to the ThiG family. As to quaternary structure, homotetramer. Forms heterodimers with either ThiH or ThiS.

It localises to the cytoplasm. The catalysed reaction is [ThiS sulfur-carrier protein]-C-terminal-Gly-aminoethanethioate + 2-iminoacetate + 1-deoxy-D-xylulose 5-phosphate = [ThiS sulfur-carrier protein]-C-terminal Gly-Gly + 2-[(2R,5Z)-2-carboxy-4-methylthiazol-5(2H)-ylidene]ethyl phosphate + 2 H2O + H(+). It participates in cofactor biosynthesis; thiamine diphosphate biosynthesis. In terms of biological role, catalyzes the rearrangement of 1-deoxy-D-xylulose 5-phosphate (DXP) to produce the thiazole phosphate moiety of thiamine. Sulfur is provided by the thiocarboxylate moiety of the carrier protein ThiS. In vitro, sulfur can be provided by H(2)S. The chain is Thiazole synthase from Pseudomonas putida (strain W619).